The chain runs to 345 residues: Inositol phosphoceramide mannosyltransferase 2 (345 aa).

The chain crosses the membrane as a helical span at residues 4–24 (VIYKFAVFAAVNFFLMSSIVL). N-linked (GlcNAc...) asparagine glycosylation is present at Asn55. The helical transmembrane segment at 220–240 (YWLPYLTIMLSTGPLSISFLW) threads the bilayer. The N-linked (GlcNAc...) asparagine glycan is linked to Asn269. The chain crosses the membrane as a helical span at residues 296-316 (LAYVIVAGFCLYFILSYMFFS).

Belongs to the glycosyltransferase 32 family.

The protein localises to the golgi apparatus. The protein resides in the cis-Golgi network membrane. Its subcellular location is the trans-Golgi network membrane. Its function is as follows. With imt1 and imt3, is required for the synthesis of mannosyl phosphorylinositol ceramide (MIPC). Catalyzes the addition of mannosyl to phosphorylinositol ceramide (IPC). MIPC is essential for cell morphology, cell-surface distribution of ergosterol, localization for plasma-membrane transporters, and lipid-raft-mediated endocytosis of plasma membrane proteins to the vacuole. In Schizosaccharomyces pombe (strain 972 / ATCC 24843) (Fission yeast), this protein is Inositol phosphoceramide mannosyltransferase 2.